We begin with the raw amino-acid sequence, 309 residues long: ATP synthase gamma chain (309 aa).

Belongs to the ATPase gamma chain family. In terms of assembly, F-type ATPases have 2 components, CF(1) - the catalytic core - and CF(0) - the membrane proton channel. CF(1) has five subunits: alpha(3), beta(3), gamma(1), delta(1), epsilon(1). CF(0) has three main subunits: a, b and c.

The protein localises to the cell membrane. Its function is as follows. Produces ATP from ADP in the presence of a proton gradient across the membrane. The gamma chain is believed to be important in regulating ATPase activity and the flow of protons through the CF(0) complex. The protein is ATP synthase gamma chain of Mycobacterium sp. (strain JLS).